A 227-amino-acid chain; its full sequence is Small ribosomal subunit protein uS3 (227 aa).

The region spanning 39 to 107 (VREFLMKKLE…PVHINIEEIR (69 aa)) is the KH type-2 domain.

Belongs to the universal ribosomal protein uS3 family. As to quaternary structure, part of the 30S ribosomal subunit. Forms a tight complex with proteins S10 and S14.

Functionally, binds the lower part of the 30S subunit head. Binds mRNA in the 70S ribosome, positioning it for translation. This Hahella chejuensis (strain KCTC 2396) protein is Small ribosomal subunit protein uS3.